Reading from the N-terminus, the 114-residue chain is RHSDPARRGELSVCDSISEWVTAADKKTAVDMSGGTVTVLEKVPVSKGQLKQYFYETKCNPMGYTKEGCRGIDKRHWNSQCRTTQSYVRALTMDSKKRIGWRFIRIDTSCVCTL.

Intrachain disulfides connect Cys14/Cys81, Cys59/Cys110, and Cys69/Cys112.

The protein belongs to the NGF-beta family. As to quaternary structure, monomers and homodimers. Binds to NTRK2/TRKB. Can form heterodimers with other neurotrophin family members, such as NTF3 and NTF4 (in vitro), but the physiological relevance of this is not clear. BDNF precursor form: interacts with the heterodimer formed by NGFR and SORCS2. Mature BDNF has much lower affinity for the heterodimer formed by NGFR and SORCS2. In terms of processing, N-glycosylated and glycosulfated, contrary to mature BDNF. Post-translationally, mature BDNF is produced by proteolytic removal of the propeptide, catalyzed by a FURIN family member. In addition, the precursor form is proteolytically cleaved within the propeptide, but this is not an obligatory intermediate for the production of mature BDNF. Can be converted into mature BDNF by plasmin (PLG).

The protein localises to the secreted. In terms of biological role, important signaling molecule that activates signaling cascades downstream of NTRK2. During development, promotes the survival and differentiation of selected neuronal populations of the peripheral and central nervous systems. Participates in axonal growth, pathfinding and in the modulation of dendritic growth and morphology. Major regulator of synaptic transmission and plasticity at adult synapses in many regions of the CNS. The versatility of BDNF is emphasized by its contribution to a range of adaptive neuronal responses including long-term potentiation (LTP), long-term depression (LTD), certain forms of short-term synaptic plasticity, as well as homeostatic regulation of intrinsic neuronal excitability. Its function is as follows. Important signaling molecule that activates signaling cascades downstream of NTRK2. Activates signaling cascades via the heterodimeric receptor formed by NGFR and SORCS2. Signaling via NGFR and SORCS2 plays a role in synaptic plasticity and long-term depression (LTD). Binding to NGFR and SORCS2 promotes neuronal apoptosis. Promotes neuronal growth cone collapse. This is Neurotrophic factor BDNF precursor form (BDNF) from Macaca mulatta (Rhesus macaque).